Reading from the N-terminus, the 72-residue chain is Large ribosomal subunit protein uL29 (72 aa).

Belongs to the universal ribosomal protein uL29 family.

This is Large ribosomal subunit protein uL29 from Prochlorococcus marinus (strain MIT 9215).